We begin with the raw amino-acid sequence, 222 residues long: Deoxyribose-phosphate aldolase (222 aa).

D89 (proton donor/acceptor) is an active-site residue. K152 (schiff-base intermediate with acetaldehyde) is an active-site residue. K181 functions as the Proton donor/acceptor in the catalytic mechanism.

The protein belongs to the DeoC/FbaB aldolase family. DeoC type 1 subfamily.

It localises to the cytoplasm. The enzyme catalyses 2-deoxy-D-ribose 5-phosphate = D-glyceraldehyde 3-phosphate + acetaldehyde. It functions in the pathway carbohydrate degradation; 2-deoxy-D-ribose 1-phosphate degradation; D-glyceraldehyde 3-phosphate and acetaldehyde from 2-deoxy-alpha-D-ribose 1-phosphate: step 2/2. In terms of biological role, catalyzes a reversible aldol reaction between acetaldehyde and D-glyceraldehyde 3-phosphate to generate 2-deoxy-D-ribose 5-phosphate. This is Deoxyribose-phosphate aldolase from Clostridium novyi (strain NT).